The primary structure comprises 436 residues: UDP-N-acetylmuramate--L-alanine ligase (436 aa).

108–114 (GAHGKTS) lines the ATP pocket.

Belongs to the MurCDEF family.

It localises to the cytoplasm. The enzyme catalyses UDP-N-acetyl-alpha-D-muramate + L-alanine + ATP = UDP-N-acetyl-alpha-D-muramoyl-L-alanine + ADP + phosphate + H(+). It participates in cell wall biogenesis; peptidoglycan biosynthesis. Cell wall formation. The polypeptide is UDP-N-acetylmuramate--L-alanine ligase (Bacillus cytotoxicus (strain DSM 22905 / CIP 110041 / 391-98 / NVH 391-98)).